Reading from the N-terminus, the 349-residue chain is Protein RecA (349 aa).

An ATP-binding site is contributed by 64–71 (GPESSGKT).

Belongs to the RecA family.

It is found in the cytoplasm. Can catalyze the hydrolysis of ATP in the presence of single-stranded DNA, the ATP-dependent uptake of single-stranded DNA by duplex DNA, and the ATP-dependent hybridization of homologous single-stranded DNAs. It interacts with LexA causing its activation and leading to its autocatalytic cleavage. This is Protein RecA from Rhodopseudomonas palustris (strain ATCC BAA-98 / CGA009).